A 298-amino-acid polypeptide reads, in one-letter code: uncharacterized protein (298 aa).

10 helical membrane-spanning segments follow: residues 5-23 (ILVS…YFST), 33-52 (IFGY…VTLF), 72-91 (ALSY…LFLW), 101-120 (VSFG…RVFF), 127-145 (FKFI…NIVL), 149-166 (LSWE…YFSI), 175-194 (LASF…YFAL), 207-229 (FIWG…YVIA), 238-260 (LGLL…GEQI), and 265-284 (YPLF…DGVY). Residues 13–144 (FLFGYMYYFS…ATLGVISNIV (132 aa)) form the EamA domain.

It belongs to the EamA transporter family.

It is found in the cell membrane. This is an uncharacterized protein from Haemophilus influenzae (strain ATCC 51907 / DSM 11121 / KW20 / Rd).